Consider the following 117-residue polypeptide: Protein GL2-INTERACTING REPRESSOR 2 (117 aa).

A disordered region spans residues methionine 1–threonine 56. Positions lysine 10 to leucine 15 match the EAR motif. Low complexity predominate over residues arginine 31–threonine 49.

In terms of assembly, interacts with GL2. Interacts with TPL.

The protein resides in the nucleus. In terms of biological role, acts as a negative regulator of root hair development redundantly with GIR1. GIR1 and GIR2 may function as adapter proteins that associate with GL2 and participate in the control of root hair formation. GIR1 and GIR2 may function as adapter proteins that associate with TPL and participate in the repression of root gene expression. The chain is Protein GL2-INTERACTING REPRESSOR 2 from Arabidopsis thaliana (Mouse-ear cress).